Consider the following 144-residue polypeptide: Transcription antitermination protein NusB (144 aa).

This sequence belongs to the NusB family.

In terms of biological role, involved in transcription antitermination. Required for transcription of ribosomal RNA (rRNA) genes. Binds specifically to the boxA antiterminator sequence of the ribosomal RNA (rrn) operons. This chain is Transcription antitermination protein NusB, found in Buchnera aphidicola subsp. Baizongia pistaciae (strain Bp).